A 216-amino-acid polypeptide reads, in one-letter code: Phosphatidylserine decarboxylase proenzyme (216 aa).

S185 functions as the Schiff-base intermediate with substrate; via pyruvic acid in the catalytic mechanism. S185 bears the Pyruvic acid (Ser); by autocatalysis mark.

It belongs to the phosphatidylserine decarboxylase family. PSD-A subfamily. In terms of assembly, heterodimer of a large membrane-associated beta subunit and a small pyruvoyl-containing alpha subunit. Pyruvate serves as cofactor. Post-translationally, is synthesized initially as an inactive proenzyme. Formation of the active enzyme involves a self-maturation process in which the active site pyruvoyl group is generated from an internal serine residue via an autocatalytic post-translational modification. Two non-identical subunits are generated from the proenzyme in this reaction, and the pyruvate is formed at the N-terminus of the alpha chain, which is derived from the carboxyl end of the proenzyme. The post-translation cleavage follows an unusual pathway, termed non-hydrolytic serinolysis, in which the side chain hydroxyl group of the serine supplies its oxygen atom to form the C-terminus of the beta chain, while the remainder of the serine residue undergoes an oxidative deamination to produce ammonia and the pyruvoyl prosthetic group on the alpha chain.

It is found in the cell membrane. The catalysed reaction is a 1,2-diacyl-sn-glycero-3-phospho-L-serine + H(+) = a 1,2-diacyl-sn-glycero-3-phosphoethanolamine + CO2. It functions in the pathway phospholipid metabolism; phosphatidylethanolamine biosynthesis; phosphatidylethanolamine from CDP-diacylglycerol: step 2/2. In terms of biological role, catalyzes the formation of phosphatidylethanolamine (PtdEtn) from phosphatidylserine (PtdSer). This Nitrosomonas eutropha (strain DSM 101675 / C91 / Nm57) protein is Phosphatidylserine decarboxylase proenzyme.